The following is a 206-amino-acid chain: Ras-related protein RABG3c (206 aa).

15 to 22 (GDSGVGKT) lines the GTP pocket. Residues 37–45 (YKATIGADF) carry the Effector region motif. GTP-binding positions include 63-67 (DTAGQ), 125-128 (NKTD), and 158-159 (SA). 2 S-geranylgeranyl cysteine lipidation sites follow: C204 and C206. At C206 the chain carries Cysteine methyl ester.

Belongs to the small GTPase superfamily. Rab family.

It localises to the cell membrane. Intracellular vesicle trafficking and protein transport. This is Ras-related protein RABG3c (RABG3C) from Arabidopsis thaliana (Mouse-ear cress).